The sequence spans 59 residues: Phycobilisome degradation protein NblA (59 aa).

The protein to chloroplast ycf18.

Its function is as follows. Involved in phycobilisome (PBS) degradation during nutrient deprivation. May mark the PBS for degradation by covalent association with PBS components or may disrupt the PBS via ionic interactions. This chain is Phycobilisome degradation protein NblA, found in Synechococcus elongatus (strain ATCC 33912 / PCC 7942 / FACHB-805) (Anacystis nidulans R2).